The primary structure comprises 141 residues: Putative nickel-responsive regulator (141 aa).

Positions 80, 91, 93, and 99 each coordinate Ni(2+).

Belongs to the transcriptional regulatory CopG/NikR family. It depends on Ni(2+) as a cofactor.

Functionally, transcriptional regulator. The chain is Putative nickel-responsive regulator from Methanococcus aeolicus (strain ATCC BAA-1280 / DSM 17508 / OCM 812 / Nankai-3).